Consider the following 66-residue polypeptide: MKASDVRAFTADQLKDELAKLKKEQFNLRFQKATGQLEKSSRINEVRKDIARVKTIARQKAAEVKA.

It belongs to the universal ribosomal protein uL29 family.

This Rhizobium johnstonii (strain DSM 114642 / LMG 32736 / 3841) (Rhizobium leguminosarum bv. viciae) protein is Large ribosomal subunit protein uL29.